Here is a 437-residue protein sequence, read N- to C-terminus: Aspartic proteinase CDR1 (437 aa).

The first 25 residues, 1–25 (MASLFSSVLLSLCLLSSLFLSNANA), serve as a signal peptide directing secretion. A propeptide spans 26–73 (KPKLGFTADLIHRDSPKSPFYNPMETSSQRLRNAIHRSVNRVFHFTEK) (activation peptide). A Peptidase A1 domain is found at 90 to 430 (YLMNVSIGTP…DTVSKTVSFK (341 aa)). A glycan (N-linked (GlcNAc...) asparagine) is linked at N93. Catalysis depends on residues D108 and D319.

Belongs to the peptidase A1 family.

The protein resides in the secreted. The protein localises to the extracellular space. Its subcellular location is the apoplast. Involved in salicylic acid-dependent inducible resistance responses. May release an endogenous peptide elicitor required for the activation of inducible resistance mechanisms. Possesses protease activity in vitro. This Arabidopsis thaliana (Mouse-ear cress) protein is Aspartic proteinase CDR1 (CDR1).